The following is a 470-amino-acid chain: Serine carboxypeptidase ctsa-4.1 (470 aa).

Residues 1–19 (MKLLSILFIFVSSYSFCLA) form the signal peptide. The N-linked (GlcNAc...) asparagine glycan is linked to Asn132. The active site involves Ser169. A glycan (N-linked (GlcNAc...) asparagine) is linked at Asn316. Asp380 is a catalytic residue. A glycan (N-linked (GlcNAc...) asparagine) is linked at Asn396. His441 is a catalytic residue.

The protein belongs to the peptidase S10 family.

The enzyme catalyses Release of a C-terminal amino acid with broad specificity.. This chain is Serine carboxypeptidase ctsa-4.1, found in Caenorhabditis elegans.